Consider the following 336-residue polypeptide: Fimbrial adhesin PapGII (336 aa).

Positions 1 to 20 are cleaved as a signal peptide; the sequence is MKKWFPALLFSLCVSGESSA. Intrachain disulfides connect Cys-64-Cys-138 and Cys-217-Cys-249. D-galactose contacts are provided by residues Glu-79 and 124–127; that span reads GYKW.

Belongs to the adhesin PapG family.

It is found in the secreted. The protein localises to the fimbrium. Tip adhesin component of type P pili that plays a critical role in kidney infection through targeted interaction with the globoseries glycolipids containing the Gal-alpha(1-4)-Gal disaccharide present on uroepithelial cells. In turn, transcriptionally regulates host gene expression in kidney cells, leading to inflammatory pathway activation and renal tissue damage. Acts thereby as key determinant of invasive uropathogenic E.coli (UPEC), which cause pyelonephritis and urinary-source bacteremia. In Escherichia coli O6:H1 (strain CFT073 / ATCC 700928 / UPEC), this protein is Fimbrial adhesin PapGII.